We begin with the raw amino-acid sequence, 83 residues long: Mitochondrial import inner membrane translocase subunit Tim8 (83 aa).

The Twin CX3C motif signature appears at 35-60; sequence CWDVCFSDYRPPSKMDGKTQTCIQNC. Cystine bridges form between Cys-35/Cys-60 and Cys-39/Cys-56.

This sequence belongs to the small Tim family. Heterohexamer; composed of 3 copies of ddp-1/tim-8 and 3 copies of tin-13/tim-13, named soluble 70 kDa complex. Associates with the TIM22 complex, whose core is composed of tim-22.

The protein resides in the mitochondrion inner membrane. Its function is as follows. Mitochondrial intermembrane chaperone that participates in the import and insertion of some multi-pass transmembrane proteins into the mitochondrial inner membrane. Also required for the transfer of beta-barrel precursors from the TOM complex to the sorting and assembly machinery (SAM complex) of the outer membrane. Acts as a chaperone-like protein that protects the hydrophobic precursors from aggregation and guide them through the mitochondrial intermembrane space. The ddp-1/tim-8-tim-13 complex mediates the import of some proteins while the predominant tim-9/tin-9.1-tim-10/tin-10 70 kDa complex mediates the import of much more proteins. The polypeptide is Mitochondrial import inner membrane translocase subunit Tim8 (Caenorhabditis briggsae).